Consider the following 224-residue polypeptide: GTP cyclohydrolase 1 (224 aa).

The segment at 1 to 20 (MKQEKTVSPTVENNRSAESR) is disordered. Positions 114, 117, and 185 each coordinate Zn(2+).

It belongs to the GTP cyclohydrolase I family. As to quaternary structure, toroid-shaped homodecamer, composed of two pentamers of five dimers.

It carries out the reaction GTP + H2O = 7,8-dihydroneopterin 3'-triphosphate + formate + H(+). It participates in cofactor biosynthesis; 7,8-dihydroneopterin triphosphate biosynthesis; 7,8-dihydroneopterin triphosphate from GTP: step 1/1. In Chlorobaculum tepidum (strain ATCC 49652 / DSM 12025 / NBRC 103806 / TLS) (Chlorobium tepidum), this protein is GTP cyclohydrolase 1.